A 296-amino-acid polypeptide reads, in one-letter code: Methylsterol monooxygenase 1 (296 aa).

A run of 2 helical transmembrane segments spans residues 55 to 75 and 100 to 120; these read LLVHEASYFLLCVPGFIFQFI and TLIFNHFFIQLPLICGTYYFT. The 130-residue stretch at 145–274 folds into the Fatty acid hydroxylase domain; it reads CAVIEDAWHY…FTWWDRIFGT (130 aa). The short motif at 157–161 is the Histidine box-1 element; it reads HRLLH. Positions 170 to 174 match the Histidine box-2 motif; that stretch reads HKVHH. A helical transmembrane segment spans residues 199-219; that stretch reads FFIGIVVFCNHVVLLWAWVIC. Residues 249-255 carry the Histidine box-3 motif; the sequence is FHDFHHM.

It belongs to the sterol desaturase family. The cofactor is Fe cation.

The protein localises to the endoplasmic reticulum membrane. The enzyme catalyses 4,4-dimethyl-5alpha-cholest-7-en-3beta-ol + 6 Fe(II)-[cytochrome b5] + 3 O2 + 5 H(+) = 4alpha-carboxy-4beta-methyl-5alpha-cholest-7-ene-3beta-ol + 6 Fe(III)-[cytochrome b5] + 4 H2O. It functions in the pathway steroid biosynthesis; zymosterol biosynthesis; zymosterol from lanosterol: step 3/6. Its function is as follows. Catalyzes the first step in the removal of the two C-4 methyl groups of 4,4-dimethylzymosterol. The sequence is that of Methylsterol monooxygenase 1 (MSMO1) from Gallus gallus (Chicken).